The primary structure comprises 493 residues: Glycosyltransferase alg8 (493 aa).

4 helical membrane-spanning segments follow: residues 13-32 (GWLF…PTSI), 47-69 (VGIW…LYIV), 380-402 (LTVA…LLWI), and 422-444 (PAYP…YVFF).

It belongs to the glycosyltransferase 2 family.

Its subcellular location is the cell membrane. The protein operates within glycan biosynthesis; alginate biosynthesis. Functionally, possibly a processive enzyme that polymerizes GDP-mannuronic acid. This Pseudomonas syringae pv. tomato (strain ATCC BAA-871 / DC3000) protein is Glycosyltransferase alg8 (alg8).